A 31-amino-acid polypeptide reads, in one-letter code: MLTITSYFGFLLAALTITSALFIGLNKIRLI.

The helical transmembrane segment at 4 to 24 (ITSYFGFLLAALTITSALFIG) threads the bilayer.

Belongs to the PetL family. In terms of assembly, the 4 large subunits of the cytochrome b6-f complex are cytochrome b6, subunit IV (17 kDa polypeptide, PetD), cytochrome f and the Rieske protein, while the 4 small subunits are PetG, PetL, PetM and PetN. The complex functions as a dimer.

It localises to the plastid. The protein localises to the chloroplast thylakoid membrane. In terms of biological role, component of the cytochrome b6-f complex, which mediates electron transfer between photosystem II (PSII) and photosystem I (PSI), cyclic electron flow around PSI, and state transitions. PetL is important for photoautotrophic growth as well as for electron transfer efficiency and stability of the cytochrome b6-f complex. This Coffea arabica (Arabian coffee) protein is Cytochrome b6-f complex subunit 6.